Consider the following 1201-residue polypeptide: Potassium/sodium hyperpolarization-activated cyclic nucleotide-gated channel 4 (1201 aa).

Topologically, residues 1 to 263 (MDKLPPSMRK…IIHPYSDFRF (263 aa)) are cytoplasmic. A disordered region spans residues 24 to 183 (WIMDEEEDGE…PASASCEQPS (160 aa)). Positions 26–36 (MDEEEDGEEEG) are enriched in acidic residues. The segment covering 105-118 (SRGGGSGGAGGGSS) has biased composition (gly residues). Positions 121-132 (HLHDSAEERRLI) are enriched in basic and acidic residues. S139 bears the Phosphoserine mark. Residues 164 to 174 (ASPPPQQPPQP) show a composition bias toward pro residues. The interval 209–260 (GQSGFMQRQFGAMLQPGVNKFSLRMFGSQKAVEREQERVKSAGFWIIHPYSD) is involved in subunit assembly. The helical transmembrane segment at 264-286 (YWDLTMLLLMVGNLIIIPVGITF) threads the bilayer. Residues 287-293 (FKDENTT) lie on the Extracellular side of the membrane. A helical transmembrane segment spans residues 294–314 (PWIVFNVVSDTFFLIDLVLNF). The Cytoplasmic portion of the chain corresponds to 315–336 (RTGIVVEDNTEIILDPQRIKMK). The chain crosses the membrane as a helical span at residues 337–359 (YLKSWFVVDFISSIPVDYIFLIV). At 360 to 378 (ETRIDSEVYKTARALRIVR) the chain is on the extracellular side. The chain crosses the membrane as a helical; Voltage-sensor span at residues 379 to 399 (FTKILSLLRLLRLSRLIRYIH). Residues 400–413 (QWEEIFHMTYDLAS) lie on the Cytoplasmic side of the membrane. Residues 414 to 436 (AVVRIVNLIGMMLLLCHWDGCLQ) traverse the membrane as a helical segment. The Extracellular segment spans residues 437–464 (FLVPMLQDFPHDCWVSINGMVNNSWGKQ). N458 carries N-linked (GlcNAc...) asparagine glycosylation. The segment at residues 465 to 486 (YSYALFKAMSHMLCIGYGRQAP) is an intramembrane region (pore-forming). Residues 487-491 (VGMSD) lie on the Extracellular side of the membrane. The chain crosses the membrane as a helical span at residues 492 to 517 (VWLTMLSMIVGATCYAMFIGHATALI). The Cytoplasmic portion of the chain corresponds to 518–1201 (QSLDSSRRQY…PVRSKLPSNL (684 aa)). 4 residues coordinate 3',5'-cyclic GMP: Y559, K562, F564, and E566. Residues G659, E660, C662, R669, T670, V673, and R710 each contribute to the 3',5'-cyclic AMP site. 2 disordered regions span residues 804–902 (AIFR…TAAA) and 914–1201 (ALGG…PSNL). Low complexity-rich tracts occupy residues 831 to 856 (SLIP…SSSS) and 866 to 880 (SAPP…SSSS). Residues 881-894 (SPPPGACGSPPAPT) are compositionally biased toward pro residues. 2 stretches are compositionally biased toward low complexity: residues 915–939 (LGGS…SPQA) and 967–995 (RSPS…SSTP). A compositionally biased stretch (pro residues) spans 1029-1042 (GHSPGPPRTFPSAP). Residues 1045 to 1056 (ASGSHGSLLLPP) show a composition bias toward low complexity. 2 positions are modified to phosphoserine: S1105 and S1108. Gly residues predominate over residues 1122-1134 (AGGGSGSSGGLGP).

This sequence belongs to the potassium channel HCN family. In terms of assembly, homotetramer. The potassium channel is composed of a homo- or heterotetrameric complex of pore-forming subunits. Interacts with PEX5L with a 4:4 HCN4:PEX5L stoichiometry; reduces the effects of cAMP on the voltage-dependence and rate of activation. Interacts with IRAG1; regulates HCN4 channel activity. Interacts with IRAG2; regulates HCN4 channel activity. In terms of processing, S-palmitoylated. In terms of tissue distribution, detected in a subset of elongated cells in taste buds.

The protein resides in the cell membrane. The enzyme catalyses K(+)(in) = K(+)(out). It carries out the reaction Na(+)(in) = Na(+)(out). Its activity is regulated as follows. Activated by cAMP, and to a lesser extent by cGMP and cCMP. cAMP binding causes a conformation change that leads to the assembly of an active tetramer and channel opening. Binding of cAMP removes a tonic inhibition conferred by cyclic nucleotide-binding domain (CNBD) on channel opening. Cyclic dinucleotides can modulate HCN4 channel; cyclic dinucleotides acting as potent antagonists of cAMP. Inhibited by extracellular Cs(+) ions. Auxiliary subunits can also regulate HCN4 channel. IRAG1 causes a gain-of-function by shifting HCN4 activation to more depolarized membrane potentials in the absence of cAMP. In contrast, IRAG2 causes a loss-of-function by inhibiting cAMP-dependent potentiation of HCN4 activation. Functionally, hyperpolarization-activated ion channel that are permeable to Na(+) and K(+) ions with very slow activation and inactivation. Exhibits higher selectivity for K(+) over Na(+) ions. Contributes to the native pacemaker currents in heart (If) that regulate the rhythm of heart beat. Contributes to the native pacemaker currents in neurons (Ih). May mediate responses to sour stimuli. This chain is Potassium/sodium hyperpolarization-activated cyclic nucleotide-gated channel 4 (Hcn4), found in Mus musculus (Mouse).